The following is a 594-amino-acid chain: Interactor of HORMAD1 protein 1 (594 aa).

Coiled coils occupy residues 109–135, 165–189, and 219–245; these read VGKS…SETL, QSIL…NDLV, and EMKS…CEQL. The span at 434–443 shows a compositional bias: basic and acidic residues; sequence VEMRGKDKKQ. A disordered region spans residues 434-454; the sequence is VEMRGKDKKQQPRKAHRAHRG. The segment covering 444–454 has biased composition (basic residues); the sequence is QPRKAHRAHRG. S588 and S589 each carry phosphoserine.

As to quaternary structure, part of the MCD recombinosome complex, at least composed of IHO1, REC114 and MEI4. Interacts with REC114. Interacts with MEI4. Interacts with HORMAD1. Interacts with ANKRD31.

Its subcellular location is the chromosome. Required for DNA double-strand breaks (DSBs) formation in unsynapsed regions during meiotic recombination. Probably acts by forming a complex with MEI4 and REC114, which activates DSBs formation in unsynapsed regions, an essential step to ensure completion of synapsis. Not required for HORMAD1 functions in pairing-independent synaptonemal complex formation, ATR recruitment to unsynapsed axes, meiotic silencing of unsynapsed chromatin (MSUC) or meiotic surveillance. The chain is Interactor of HORMAD1 protein 1 from Homo sapiens (Human).